Reading from the N-terminus, the 105-residue chain is Small ribosomal subunit protein uS10 (105 aa).

The protein belongs to the universal ribosomal protein uS10 family. As to quaternary structure, part of the 30S ribosomal subunit.

Involved in the binding of tRNA to the ribosomes. The protein is Small ribosomal subunit protein uS10 of Anaplasma marginale (strain Florida).